Reading from the N-terminus, the 322-residue chain is Cytochrome f (322 aa).

The N-terminal stretch at Met-1 to Ala-37 is a signal peptide. The heme site is built by Tyr-38, Cys-58, Cys-61, and His-62. A helical transmembrane segment spans residues Val-285–Leu-307.

It belongs to the cytochrome f family. The 4 large subunits of the cytochrome b6-f complex are cytochrome b6, subunit IV (17 kDa polypeptide, petD), cytochrome f and the Rieske protein, while the 4 small subunits are PetG, PetL, PetM and PetN. The complex functions as a dimer. It depends on heme as a cofactor.

It localises to the plastid. Its subcellular location is the chloroplast thylakoid membrane. Functionally, component of the cytochrome b6-f complex, which mediates electron transfer between photosystem II (PSII) and photosystem I (PSI), cyclic electron flow around PSI, and state transitions. The chain is Cytochrome f (petA) from Anthoceros angustus (Hornwort).